The chain runs to 331 residues: 6-phosphogluconolactonase (331 aa).

It belongs to the cycloisomerase 2 family.

It carries out the reaction 6-phospho-D-glucono-1,5-lactone + H2O = 6-phospho-D-gluconate + H(+). It functions in the pathway carbohydrate degradation; pentose phosphate pathway; D-ribulose 5-phosphate from D-glucose 6-phosphate (oxidative stage): step 2/3. In terms of biological role, catalyzes the hydrolysis of 6-phosphogluconolactone to 6-phosphogluconate. This chain is 6-phosphogluconolactonase, found in Salmonella gallinarum (strain 287/91 / NCTC 13346).